Consider the following 101-residue polypeptide: Small ribosomal subunit protein uS14 (101 aa).

Belongs to the universal ribosomal protein uS14 family. Part of the 30S ribosomal subunit. Contacts proteins S3 and S10.

Its function is as follows. Binds 16S rRNA, required for the assembly of 30S particles and may also be responsible for determining the conformation of the 16S rRNA at the A site. The polypeptide is Small ribosomal subunit protein uS14 (Leptothrix cholodnii (strain ATCC 51168 / LMG 8142 / SP-6) (Leptothrix discophora (strain SP-6))).